The sequence spans 88 residues: UPF0223 protein RBAM_014500 (88 aa).

The protein belongs to the UPF0223 family.

The polypeptide is UPF0223 protein RBAM_014500 (Bacillus velezensis (strain DSM 23117 / BGSC 10A6 / LMG 26770 / FZB42) (Bacillus amyloliquefaciens subsp. plantarum)).